Consider the following 1785-residue polypeptide: Brefeldin A-inhibited guanine nucleotide-exchange protein 2 (1785 aa).

Methionine 1 carries the N-acetylmethionine modification. Residues 2-224 (QESQTKSMFV…KPQSPVIQAA (223 aa)) are DCB; DCB:DCB domain and DCB:HUS domain interaction. Serine 214, serine 218, and serine 227 each carry phosphoserine. The interval 232–285 (RLKHSQAQSKPTTPEKTDLTNGEHARSDSGKVSTENGDAPRERGSSLSGTDDGA) is disordered. Position 244 is a phosphothreonine (threonine 244). Positions 244–260 (TPEKTDLTNGEHARSDS) are enriched in basic and acidic residues. Residues serine 277, serine 348, and serine 349 each carry the phosphoserine modification. An HUS; DCB:HUS domain interaction region spans residues 508–528 (ADAQCVVDIYVNYDCDLNAAN). At serine 614 the chain carries Phosphoserine. Position 616 is a phosphothreonine (threonine 616). Serine 617 is subject to Phosphoserine. The residue at position 626 (threonine 626) is a Phosphothreonine. Residues 654–785 (FNKKPKRGIQ…IIMLTTDLHS (132 aa)) enclose the SEC7 domain. Phosphoserine is present on residues serine 700, serine 1511, serine 1513, serine 1514, serine 1525, serine 1528, serine 1534, and serine 1782. Residues 1514–1532 (SIDKNPSERGQSQLSNPTD) show a composition bias toward polar residues. Residues 1514–1535 (SIDKNPSERGQSQLSNPTDDSW) form a disordered region.

In terms of assembly, homodimer. Interacts with ARFGEF1/BIG1; both proteins are probably part of the same or very similar macromolecular complexes. Interacts with PRKAR1A, PRKAR2A, PRKAR1B, PRKAR2B, PPP1CC, PDE3A, TNFRSF1A, MYCBP and EXOC7. Interacts with GABRB1, GABRB2 and GABRB3. Post-translationally, in vitro phosphorylated by PKA reducing its GEF activity and dephosphorylated by phosphatase PP1. Expressed in placenta, lung, heart, brain, kidney and pancreas.

It localises to the cytoplasm. It is found in the membrane. The protein localises to the golgi apparatus. The protein resides in the perinuclear region. Its subcellular location is the trans-Golgi network. It localises to the endosome. It is found in the cytoskeleton. The protein localises to the microtubule organizing center. The protein resides in the centrosome. Its subcellular location is the cell projection. It localises to the dendrite. It is found in the cytoplasmic vesicle. The protein localises to the synapse. Inhibited by brefeldin A. In terms of biological role, promotes guanine-nucleotide exchange on ARF1 and ARF3 and to a lower extent on ARF5 and ARF6. Promotes the activation of ARF1/ARF5/ARF6 through replacement of GDP with GTP. Involved in the regulation of Golgi vesicular transport. Required for the integrity of the endosomal compartment. Involved in trafficking from the trans-Golgi network (TGN) to endosomes and is required for membrane association of the AP-1 complex and GGA1. Seems to be involved in recycling of the transferrin receptor from recycling endosomes to the plasma membrane. Probably is involved in the exit of GABA(A) receptors from the endoplasmic reticulum. Involved in constitutive release of tumor necrosis factor receptor 1 via exosome-like vesicles; the function seems to involve PKA and specifically PRKAR2B. Proposed to act as A kinase-anchoring protein (AKAP) and may mediate crosstalk between Arf and PKA pathways. This Homo sapiens (Human) protein is Brefeldin A-inhibited guanine nucleotide-exchange protein 2 (ARFGEF2).